We begin with the raw amino-acid sequence, 176 residues long: Large ribosomal subunit protein uL10 (176 aa).

This sequence belongs to the universal ribosomal protein uL10 family. In terms of assembly, part of the ribosomal stalk of the 50S ribosomal subunit. The N-terminus interacts with L11 and the large rRNA to form the base of the stalk. The C-terminus forms an elongated spine to which L12 dimers bind in a sequential fashion forming a multimeric L10(L12)X complex.

In terms of biological role, forms part of the ribosomal stalk, playing a central role in the interaction of the ribosome with GTP-bound translation factors. This Thioalkalivibrio sulfidiphilus (strain HL-EbGR7) protein is Large ribosomal subunit protein uL10.